Here is a 136-residue protein sequence, read N- to C-terminus: Small ribosomal subunit protein uS8 (136 aa).

It belongs to the universal ribosomal protein uS8 family. Part of the 30S ribosomal subunit. Contacts proteins S5 and S12.

One of the primary rRNA binding proteins, it binds directly to 16S rRNA central domain where it helps coordinate assembly of the platform of the 30S subunit. This chain is Small ribosomal subunit protein uS8, found in Frankia alni (strain DSM 45986 / CECT 9034 / ACN14a).